The primary structure comprises 862 residues: DNA topoisomerase 3-beta-1 (862 aa).

The 151-residue stretch at 3-153 folds into the Toprim domain; that stretch reads TVLMVAEKPS…EKTVFRARFS (151 aa). The Topo IA-type catalytic domain maps to 171–593; the sequence is DHNEALSVDA…HTLDIFKRKF (423 aa). Y336 (O-(5'-phospho-DNA)-tyrosine intermediate) is an active-site residue. Residues 820–855 are disordered; that stretch reads HPMHRGGPGRRQGRGRGRGRRPPGKPNPRRPKDKMS. Residues 821–851 show a composition bias toward basic residues; the sequence is PMHRGGPGRRQGRGRGRGRRPPGKPNPRRPK.

Belongs to the type IA topoisomerase family. In terms of tissue distribution, highly expressed in testis.

The enzyme catalyses ATP-independent breakage of single-stranded DNA, followed by passage and rejoining.. In terms of biological role, releases the supercoiling and torsional tension of DNA introduced during the DNA replication and transcription by transiently cleaving and rejoining one strand of the DNA duplex. Introduces a single-strand break via transesterification at a target site in duplex DNA. The scissile phosphodiester is attacked by the catalytic tyrosine of the enzyme, resulting in the formation of a DNA-(5'-phosphotyrosyl)-enzyme intermediate and the expulsion of a 3'-OH DNA strand. The free DNA strand than undergoes passage around the unbroken strand thus removing DNA supercoils. Finally, in the religation step, the DNA 3'-OH attacks the covalent intermediate to expel the active-site tyrosine and restore the DNA phosphodiester backbone. Possesses negatively supercoiled DNA relaxing activity. This chain is DNA topoisomerase 3-beta-1 (Top3b), found in Mus musculus (Mouse).